A 74-amino-acid polypeptide reads, in one-letter code: Large ribosomal subunit protein bL31 (74 aa).

Positions 16, 18, 38, and 41 each coordinate Zn(2+).

It belongs to the bacterial ribosomal protein bL31 family. Type A subfamily. Part of the 50S ribosomal subunit. It depends on Zn(2+) as a cofactor.

Its function is as follows. Binds the 23S rRNA. This is Large ribosomal subunit protein bL31 from Mycobacteroides abscessus (strain ATCC 19977 / DSM 44196 / CCUG 20993 / CIP 104536 / JCM 13569 / NCTC 13031 / TMC 1543 / L948) (Mycobacterium abscessus).